The sequence spans 309 residues: MVAVLQSTFAIIFSMEFIVGTLGNGFIILMTCIDWVRRRKISLVDQILTALAITRITLILLVFIDWWVSVLFPALHETGKILRMYFISWTVINHCNLWLTASLSIIYFLKIASFSSIIFLYLKFRVKNVVFVTLLVSLFFLFINTAIVNVYFDVCFDGVQRNVSQVSRLYNHEQICKFLSFTNPMFAFIPFVTSMATFFLLIFSLWRHLKNMKHNAEGCRDVSTIVHIRALQTIIVSVVLYSTFFLSFFVKVWSSGSPERYLIFLFVWALGNAVLPAHTFVLIWGNCRLRWASLSLMLWLRYRFKNIDV.

Over 1–8 the chain is Extracellular; it reads MVAVLQST. A helical transmembrane segment spans residues 9–29; it reads FAIIFSMEFIVGTLGNGFIIL. Residues 30-55 lie on the Cytoplasmic side of the membrane; the sequence is MTCIDWVRRRKISLVDQILTALAITR. The helical transmembrane segment at 56–76 threads the bilayer; sequence ITLILLVFIDWWVSVLFPALH. Residues 77–101 are Extracellular-facing; it reads ETGKILRMYFISWTVINHCNLWLTA. Residues 102–122 form a helical membrane-spanning segment; it reads SLSIIYFLKIASFSSIIFLYL. The Cytoplasmic portion of the chain corresponds to 123-127; sequence KFRVK. The helical transmembrane segment at 128–148 threads the bilayer; sequence NVVFVTLLVSLFFLFINTAIV. The Extracellular segment spans residues 149–185; that stretch reads NVYFDVCFDGVQRNVSQVSRLYNHEQICKFLSFTNPM. Asn-162 carries N-linked (GlcNAc...) asparagine glycosylation. The helical transmembrane segment at 186-206 threads the bilayer; sequence FAFIPFVTSMATFFLLIFSLW. At 207–229 the chain is on the cytoplasmic side; the sequence is RHLKNMKHNAEGCRDVSTIVHIR. A helical membrane pass occupies residues 230-250; that stretch reads ALQTIIVSVVLYSTFFLSFFV. The Extracellular segment spans residues 251–262; the sequence is KVWSSGSPERYL. Residues 263 to 283 form a helical membrane-spanning segment; sequence IFLFVWALGNAVLPAHTFVLI. Residues 284–309 lie on the Cytoplasmic side of the membrane; the sequence is WGNCRLRWASLSLMLWLRYRFKNIDV.

It belongs to the G-protein coupled receptor T2R family.

It localises to the membrane. Its function is as follows. Putative taste receptor which may play a role in the perception of bitterness. The protein is Taste receptor type 2 member 113 of Rattus norvegicus (Rat).